Reading from the N-terminus, the 146-residue chain is Snaclec 4 (146 aa).

The signal sequence occupies residues M1–A23. Disulfide bonds link C27-C38, C55-C144, and C121-C136. The C-type lectin domain occupies Y34–K145.

Belongs to the snaclec family. Heterodimer; disulfide-linked.

The protein resides in the secreted. Its function is as follows. Interferes with one step of hemostasis (modulation of platelet aggregation, or coagulation cascade, for example). This chain is Snaclec 4, found in Daboia siamensis (Eastern Russel's viper).